A 546-amino-acid chain; its full sequence is Chaperonin GroEL 1 (546 aa).

ATP is bound by residues 30-33 (TLGP), Lys-51, 87-91 (DGTTT), Gly-415, 479-481 (NAA), and Asp-495. The interval 526-546 (KEDAPMPGGMPGGMGGMGMDM) is disordered. A compositionally biased stretch (gly residues) spans 534-546 (GMPGGMGGMGMDM).

It belongs to the chaperonin (HSP60) family. In terms of assembly, forms a cylinder of 14 subunits composed of two heptameric rings stacked back-to-back. Interacts with the co-chaperonin GroES.

The protein resides in the cytoplasm. The enzyme catalyses ATP + H2O + a folded polypeptide = ADP + phosphate + an unfolded polypeptide.. In terms of biological role, together with its co-chaperonin GroES, plays an essential role in assisting protein folding. The GroEL-GroES system forms a nano-cage that allows encapsulation of the non-native substrate proteins and provides a physical environment optimized to promote and accelerate protein folding. This chain is Chaperonin GroEL 1, found in Burkholderia pseudomallei (strain 1106a).